Consider the following 782-residue polypeptide: Spastin (782 aa).

The interval 1-103 (MVRTKNQSSS…GNAPRGGNSS (103 aa)) is disordered. The Cytoplasmic segment spans residues 1–115 (MVRTKNQSSS…KQNLYVVSFP (115 aa)). Positions 1–212 (MVRTKNQSSS…RAIQPLEMAG (212 aa)) are required for localization to punctate cytoplasmic foci. Low complexity predominate over residues 8–19 (SSSSSASSSTKS). The span at 25–34 (GGTTNRSRSC) shows a compositional bias: polar residues. Composition is skewed to low complexity over residues 44 to 75 (SKSS…GSSP) and 84 to 93 (TTDADLTPTS). Positions 116–136 (IIFLFNVLRSLIYQLFCIFRY) form an intramembrane region, helical. The Cytoplasmic portion of the chain corresponds to 137–782 (LYGASTKVIY…WSQDYGDITI (646 aa)). Positions 210 to 782 (MAGNRAGGNY…WSQDYGDITI (573 aa)) are sufficient for interaction with microtubules and microtubule severing. The 76-residue stretch at 235 to 310 (HRRAFEYISK…SMARDRLHFL (76 aa)) folds into the MIT domain. Residues 325–479 (KEQQQKKKSP…GSGSGASTPM (155 aa)) are disordered. The segment covering 334–343 (PQQQPQQQQQ) has biased composition (low complexity). Composition is skewed to polar residues over residues 408–426 (NKSQ…STSV) and 447–463 (QFSS…RTPI). The tract at residues 465–479 (NNAAGGSGSGASTPM) is required for interaction with microtubules. 547–554 (GPPGNGKT) lines the ATP pocket.

The protein belongs to the AAA ATPase family. Spastin subfamily. In terms of assembly, homohexamer. The homohexamer is stabilized by ATP-binding. The homohexamer may adopt a ring conformation through which microtubules pass prior to being severed. Interacts with microtubules. Interacts with atl; may be involved in microtubule dynamics.

It is found in the membrane. Its subcellular location is the cytoplasm. The protein resides in the cytoskeleton. The protein localises to the microtubule organizing center. It localises to the centrosome. It is found in the chromosome. Its subcellular location is the lipid droplet. The catalysed reaction is n ATP + n H2O + a microtubule = n ADP + n phosphate + (n+1) alpha/beta tubulin heterodimers.. In terms of biological role, ATP-dependent microtubule severing protein. Stimulates microtubule minus-end depolymerization and poleward microtubule flux in the mitotic spindle. Regulates microtubule stability in the neuromuscular junction synapse. Involved in lipid metabolism by regulating the size and distribution of lipid droplets. Involved in axon regeneration by regulating microtubule severing. The protein is Spastin of Drosophila grimshawi (Hawaiian fruit fly).